A 306-amino-acid polypeptide reads, in one-letter code: Curved DNA-binding protein (306 aa).

Residues 5-69 (DYYAIMGVKP…QRRAEYDQMW (65 aa)) enclose the J domain.

Its subcellular location is the cytoplasm. The protein localises to the nucleoid. Its function is as follows. DNA-binding protein that preferentially recognizes a curved DNA sequence. It is probably a functional analog of DnaJ; displays overlapping activities with DnaJ, but functions under different conditions, probably acting as a molecular chaperone in an adaptive response to environmental stresses other than heat shock. Lacks autonomous chaperone activity; binds native substrates and targets them for recognition by DnaK. Its activity is inhibited by the binding of CbpM. The sequence is that of Curved DNA-binding protein from Escherichia coli O7:K1 (strain IAI39 / ExPEC).